The sequence spans 530 residues: Glucose-6-phosphate isomerase (530 aa).

Glu356 functions as the Proton donor in the catalytic mechanism. Active-site residues include His387 and Lys502.

It belongs to the GPI family.

It localises to the cytoplasm. It carries out the reaction alpha-D-glucose 6-phosphate = beta-D-fructose 6-phosphate. The protein operates within carbohydrate biosynthesis; gluconeogenesis. It participates in carbohydrate degradation; glycolysis; D-glyceraldehyde 3-phosphate and glycerone phosphate from D-glucose: step 2/4. Functionally, catalyzes the reversible isomerization of glucose-6-phosphate to fructose-6-phosphate. In Borreliella burgdorferi (strain ATCC 35210 / DSM 4680 / CIP 102532 / B31) (Borrelia burgdorferi), this protein is Glucose-6-phosphate isomerase.